We begin with the raw amino-acid sequence, 943 residues long: Protein translocase subunit SecA (943 aa).

Residues Gln77, 95–99 (GEGKT), and Asp484 each bind ATP.

This sequence belongs to the SecA family. As to quaternary structure, monomer and homodimer. Part of the essential Sec protein translocation apparatus which comprises SecA, SecYEG and auxiliary proteins SecDF. Other proteins may also be involved.

The protein resides in the cell membrane. It localises to the cytoplasm. It catalyses the reaction ATP + H2O + cellular proteinSide 1 = ADP + phosphate + cellular proteinSide 2.. Functionally, part of the Sec protein translocase complex. Interacts with the SecYEG preprotein conducting channel. Has a central role in coupling the hydrolysis of ATP to the transfer of proteins into and across the cell membrane, serving as an ATP-driven molecular motor driving the stepwise translocation of polypeptide chains across the membrane. This is Protein translocase subunit SecA from Mesoplasma florum (strain ATCC 33453 / NBRC 100688 / NCTC 11704 / L1) (Acholeplasma florum).